The chain runs to 714 residues: RanBP-type and C3HC4-type zinc finger-containing protein 1 (714 aa).

2 disordered regions span residues 1-23 (MSLS…SHLG) and 152-172 (SSST…SKAP). A compositionally biased stretch (polar residues) spans 14-23 (PAQSSSSHLG). In terms of domain architecture, Ubiquitin-like spans 225 to 301 (LAVVVEDASS…TAFLYLISAR (77 aa)). A RanBP2-type zinc finger spans residues 394–426 (RTSIQPGWACPTCTYINKPTRPGCEMCSADRPE). The segment at 482 to 710 (ERVECRICYV…VNKQRCHPKC (229 aa)) is TRIAD supradomain. Positions 486, 489, 504, 506, 509, 512, 527, 536, 575, 580, 595, 598, 603, 606, 610, 615, 651, and 654 each coordinate Zn(2+). The RING-type 1 zinc-finger motif lies at 486–536 (CRICYVELESGEGVLLRECLHCFCKECLRSVILMSEDPQVACPYRDESYAC). The segment at 555–615 (QHWLQRGLSV…CKAIHEGMNC (61 aa)) adopts an IBR-type zinc-finger fold. The segment at 651–680 (CPQCGIIVQKKEGCDWLRCTVCHTEICWVT) adopts an RING-type 2; atypical zinc-finger fold. Residue Cys-664 is part of the active site. Cys-669 and Cys-672 together coordinate Zn(2+).

The protein belongs to the RBR family. Component of the LUBAC complex (linear ubiquitin chain assembly complex).

The catalysed reaction is [E2 ubiquitin-conjugating enzyme]-S-ubiquitinyl-L-cysteine + [acceptor protein]-L-lysine = [E2 ubiquitin-conjugating enzyme]-L-cysteine + [acceptor protein]-N(6)-ubiquitinyl-L-lysine.. Its pathway is protein modification; protein ubiquitination. Functionally, component of the LUBAC complex which conjugates linear ('Met-1'-linked) polyubiquitin chains to substrates and plays a key role in NF-kappa-B activation and regulation of inflammation. LUBAC conjugates linear polyubiquitin to ikbkg and RIPK1 and is involved in activation of the canonical NF-kappa-B and the JNK signaling pathways. Linear ubiquitination mediated by the LUBAC complex interferes with TNF-induced cell death and thereby prevents inflammation. LUBAC is recruited to the TNF-R1 signaling complex (TNF-RSC) to conjugate linear polyubiquitin to ikbkg and possibly other components contributing to the stability of the complex. The LUBAC complex is also involved in innate immunity by conjugating linear polyubiquitin chains at the surface of bacteria invading the cytosol to form the ubiquitin coat surrounding bacteria. LUBAC is not able to initiate formation of the bacterial ubiquitin coat, and can only promote formation of linear polyubiquitins on pre-existing ubiquitin. The bacterial ubiquitin coat acts as an 'eat-me' signal for xenophagy and promotes NF-kappa-B activation. Binds polyubiquitin of different linkage types. This Danio rerio (Zebrafish) protein is RanBP-type and C3HC4-type zinc finger-containing protein 1 (rbck1).